Here is a 466-residue protein sequence, read N- to C-terminus: Argininosuccinate lyase (466 aa).

This sequence belongs to the lyase 1 family. Argininosuccinate lyase subfamily.

The protein localises to the cytoplasm. It carries out the reaction 2-(N(omega)-L-arginino)succinate = fumarate + L-arginine. Its pathway is amino-acid biosynthesis; L-arginine biosynthesis; L-arginine from L-ornithine and carbamoyl phosphate: step 3/3. The polypeptide is Argininosuccinate lyase (Brucella anthropi (strain ATCC 49188 / DSM 6882 / CCUG 24695 / JCM 21032 / LMG 3331 / NBRC 15819 / NCTC 12168 / Alc 37) (Ochrobactrum anthropi)).